Reading from the N-terminus, the 124-residue chain is uncharacterized protein (124 aa).

A helical transmembrane segment spans residues 70–90 (LLYLALVLLLVVILSTAFFSI).

It is found in the membrane. This is an uncharacterized protein from Saccharomyces cerevisiae (strain ATCC 204508 / S288c) (Baker's yeast).